Reading from the N-terminus, the 731-residue chain is DNA ligase (731 aa).

NAD(+)-binding positions include 59 to 63, 108 to 109, and E142; these read DSEYD and SL. K144 serves as the catalytic N6-AMP-lysine intermediate. NAD(+)-binding residues include R165, E202, K318, and K342. Residues C434, C437, C452, and C458 each coordinate Zn(2+). Positions 645–731 constitute a BRCT domain; that stretch reads LASSPLSGKI…ENDGQDSIKI (87 aa).

Belongs to the NAD-dependent DNA ligase family. LigA subfamily. It depends on Mg(2+) as a cofactor. Mn(2+) serves as cofactor.

The enzyme catalyses NAD(+) + (deoxyribonucleotide)n-3'-hydroxyl + 5'-phospho-(deoxyribonucleotide)m = (deoxyribonucleotide)n+m + AMP + beta-nicotinamide D-nucleotide.. Functionally, DNA ligase that catalyzes the formation of phosphodiester linkages between 5'-phosphoryl and 3'-hydroxyl groups in double-stranded DNA using NAD as a coenzyme and as the energy source for the reaction. It is essential for DNA replication and repair of damaged DNA. This is DNA ligase from Zymomonas mobilis subsp. mobilis (strain ATCC 31821 / ZM4 / CP4).